The primary structure comprises 345 residues: MSDTPQSEPRRSDDRSGADDATAAAAGSTDAAAAAVSSKTGGIAGPPGGPGEVDGDEPAVARTVGESDEQLQDAWTDYEFDGDAKVSVSDLDTYYGEERALESVSLDIPAESVTALIGPSGCGKSTFLRCLNRMNDRIRGARVEGRVALDDRDVYGDGVNLVELRRQVGMVFQEPNPFPKSIRDNISYGPRKHGDLETGLLARLLGRDDRDAERDLVERALRRAALWDEVNDRLGDNALGLSGGQQQRLCIARCLAVDPDVILMDEPASALDPVATAKIEDLIEELAEEYTVVVVTHNMQQAARISDQTAVFLTGGRLAEYDATDAIFQNPQSQRVEDYVAGKFG.

The interval 1 to 57 (MSDTPQSEPRRSDDRSGADDATAAAAGSTDAAAAAVSSKTGGIAGPPGGPGEVDGDE) is disordered. A compositionally biased stretch (basic and acidic residues) spans 8-18 (EPRRSDDRSGA). Positions 19–35 (DDATAAAAGSTDAAAAA) are enriched in low complexity. The span at 42-52 (GIAGPPGGPGE) shows a compositional bias: gly residues. An ABC transporter domain is found at 86-340 (VSVSDLDTYY…PQSQRVEDYV (255 aa)). 118–125 (GPSGCGKS) provides a ligand contact to ATP.

The protein belongs to the ABC transporter superfamily. Phosphate importer (TC 3.A.1.7) family. The complex is composed of two ATP-binding proteins (PstB), two transmembrane proteins (PstC and PstA) and a solute-binding protein (PstS).

Its subcellular location is the cell membrane. The catalysed reaction is phosphate(out) + ATP + H2O = ADP + 2 phosphate(in) + H(+). Functionally, part of the ABC transporter complex PstSACB involved in phosphate import. Responsible for energy coupling to the transport system. This is Phosphate import ATP-binding protein PstB 2 from Halobacterium salinarum (strain ATCC 700922 / JCM 11081 / NRC-1) (Halobacterium halobium).